Reading from the N-terminus, the 901-residue chain is Protein translocase subunit SecA (901 aa).

ATP is bound by residues Gln87, 105 to 109, and Asp512; that span reads GEGKT. A disordered region spans residues 868 to 901; it reads AALAAQTGERKVGRNDPCPCGSGKKYKQCHGRLQ. Residues Cys885, Cys887, Cys896, and His897 each contribute to the Zn(2+) site. Basic residues predominate over residues 891–901; it reads KKYKQCHGRLQ.

Belongs to the SecA family. Monomer and homodimer. Part of the essential Sec protein translocation apparatus which comprises SecA, SecYEG and auxiliary proteins SecDF-YajC and YidC. Requires Zn(2+) as cofactor.

It localises to the cell inner membrane. The protein localises to the cytoplasm. It carries out the reaction ATP + H2O + cellular proteinSide 1 = ADP + phosphate + cellular proteinSide 2.. In terms of biological role, part of the Sec protein translocase complex. Interacts with the SecYEG preprotein conducting channel. Has a central role in coupling the hydrolysis of ATP to the transfer of proteins into and across the cell membrane, serving both as a receptor for the preprotein-SecB complex and as an ATP-driven molecular motor driving the stepwise translocation of polypeptide chains across the membrane. This is Protein translocase subunit SecA from Escherichia coli O45:K1 (strain S88 / ExPEC).